A 142-amino-acid chain; its full sequence is Glia maturation factor beta (142 aa).

At S2 the chain carries N-acetylserine. The region spanning 4-139 (SLVVCDVAED…TEEWLREKLG (136 aa)) is the ADF-H domain.

The protein belongs to the actin-binding proteins ADF family. GMF subfamily. Phosphorylated; stimulated by phorbol ester.

Functionally, this protein causes differentiation of brain cells, stimulation of neural regeneration, and inhibition of proliferation of tumor cells. In Mus musculus (Mouse), this protein is Glia maturation factor beta (Gmfb).